A 121-amino-acid polypeptide reads, in one-letter code: NAD(P)H-quinone oxidoreductase subunit 3, chloroplastic (121 aa).

3 consecutive transmembrane segments (helical) span residues Phe-10–Phe-30, Met-65–Met-85, and Leu-90–Val-110.

This sequence belongs to the complex I subunit 3 family. In terms of assembly, NDH is composed of at least 16 different subunits, 5 of which are encoded in the nucleus.

The protein localises to the plastid. Its subcellular location is the chloroplast thylakoid membrane. The enzyme catalyses a plastoquinone + NADH + (n+1) H(+)(in) = a plastoquinol + NAD(+) + n H(+)(out). It catalyses the reaction a plastoquinone + NADPH + (n+1) H(+)(in) = a plastoquinol + NADP(+) + n H(+)(out). NDH shuttles electrons from NAD(P)H:plastoquinone, via FMN and iron-sulfur (Fe-S) centers, to quinones in the photosynthetic chain and possibly in a chloroplast respiratory chain. The immediate electron acceptor for the enzyme in this species is believed to be plastoquinone. Couples the redox reaction to proton translocation, and thus conserves the redox energy in a proton gradient. The chain is NAD(P)H-quinone oxidoreductase subunit 3, chloroplastic from Physcomitrium patens (Spreading-leaved earth moss).